Consider the following 302-residue polypeptide: Lipoyl synthase (302 aa).

C44, C49, C55, C70, C74, C77, and S283 together coordinate [4Fe-4S] cluster. The Radical SAM core domain occupies 56–272 (WSKKHATVMI…AKVARSKGFL (217 aa)).

Belongs to the radical SAM superfamily. Lipoyl synthase family. The cofactor is [4Fe-4S] cluster.

Its subcellular location is the cytoplasm. The catalysed reaction is [[Fe-S] cluster scaffold protein carrying a second [4Fe-4S](2+) cluster] + N(6)-octanoyl-L-lysyl-[protein] + 2 oxidized [2Fe-2S]-[ferredoxin] + 2 S-adenosyl-L-methionine + 4 H(+) = [[Fe-S] cluster scaffold protein] + N(6)-[(R)-dihydrolipoyl]-L-lysyl-[protein] + 4 Fe(3+) + 2 hydrogen sulfide + 2 5'-deoxyadenosine + 2 L-methionine + 2 reduced [2Fe-2S]-[ferredoxin]. It participates in protein modification; protein lipoylation via endogenous pathway; protein N(6)-(lipoyl)lysine from octanoyl-[acyl-carrier-protein]: step 2/2. In terms of biological role, catalyzes the radical-mediated insertion of two sulfur atoms into the C-6 and C-8 positions of the octanoyl moiety bound to the lipoyl domains of lipoate-dependent enzymes, thereby converting the octanoylated domains into lipoylated derivatives. This chain is Lipoyl synthase, found in Orientia tsutsugamushi (strain Boryong) (Rickettsia tsutsugamushi).